Reading from the N-terminus, the 246-residue chain is Histone H1 (246 aa).

2 disordered regions span residues Met1–Leu51 and Gly105–Lys246. A compositionally biased stretch (low complexity) spans Pro9–Ala34. Residues Lys35–Ser47 are compositionally biased toward basic residues. An H15 domain is found at Thr49 to Ser119. 2 stretches are compositionally biased toward basic residues: residues Ala129 to Pro189 and Pro198 to Ala208. Over residues Lys224 to Pro235 the composition is skewed to low complexity.

This sequence belongs to the histone H1/H5 family.

It is found in the nucleus. The protein localises to the chromosome. In terms of biological role, histones H1 are necessary for the condensation of nucleosome chains into higher-order structures. In Zea mays (Maize), this protein is Histone H1.